Consider the following 90-residue polypeptide: Small ribosomal subunit protein uS17 (90 aa).

This sequence belongs to the universal ribosomal protein uS17 family. Part of the 30S ribosomal subunit.

Its function is as follows. One of the primary rRNA binding proteins, it binds specifically to the 5'-end of 16S ribosomal RNA. The protein is Small ribosomal subunit protein uS17 of Treponema denticola (strain ATCC 35405 / DSM 14222 / CIP 103919 / JCM 8153 / KCTC 15104).